A 141-amino-acid polypeptide reads, in one-letter code: Mu-like prophage FluMu protein gp36 (141 aa).

This sequence to phage Mu protein gp36.

This Haemophilus influenzae (strain ATCC 51907 / DSM 11121 / KW20 / Rd) protein is Mu-like prophage FluMu protein gp36.